The primary structure comprises 517 residues: Glucose-6-phosphate isomerase (517 aa).

Catalysis depends on E345, which acts as the Proton donor. Residues H376 and K490 contribute to the active site.

This sequence belongs to the GPI family.

The protein resides in the cytoplasm. It catalyses the reaction alpha-D-glucose 6-phosphate = beta-D-fructose 6-phosphate. It participates in carbohydrate biosynthesis; gluconeogenesis. It functions in the pathway carbohydrate degradation; glycolysis; D-glyceraldehyde 3-phosphate and glycerone phosphate from D-glucose: step 2/4. Its function is as follows. Catalyzes the reversible isomerization of glucose-6-phosphate to fructose-6-phosphate. This is Glucose-6-phosphate isomerase from Erythrobacter litoralis (strain HTCC2594).